Consider the following 447-residue polypeptide: Phosphoglucosamine mutase (447 aa).

S104 (phosphoserine intermediate) is an active-site residue. Positions 104, 243, 245, and 247 each coordinate Mg(2+). S104 is modified (phosphoserine).

The protein belongs to the phosphohexose mutase family. The cofactor is Mg(2+). Activated by phosphorylation.

It carries out the reaction alpha-D-glucosamine 1-phosphate = D-glucosamine 6-phosphate. Functionally, catalyzes the conversion of glucosamine-6-phosphate to glucosamine-1-phosphate. In Corynebacterium glutamicum (strain R), this protein is Phosphoglucosamine mutase.